The chain runs to 465 residues: Opioid growth factor receptor-like protein 1 (465 aa).

Disordered stretches follow at residues 1–89 (MGNL…GNAK) and 309–465 (ENFI…TSSG). 4 stretches are compositionally biased toward basic and acidic residues: residues 48–59 (REQPEQPPERAG), 316–325 (PKKEQPERSK), 363–396 (TVEE…RNSE), and 426–440 (SEKD…KDSE). Positions 442–465 (PENTSCHAEVVSQQNVTNPQTSSG) are enriched in polar residues.

This sequence belongs to the opioid growth factor receptor family.

The chain is Opioid growth factor receptor-like protein 1 (Ogfrl1) from Rattus norvegicus (Rat).